Here is a 533-residue protein sequence, read N- to C-terminus: DNA-directed RNA polymerase III subunit RPC3 (533 aa).

A disordered region spans residues 162–181 (LVPDTDSSDRGPPPPAPTLV). Residue S194 is modified to Phosphoserine. Residues 197-228 (GKGKRRRSSDEDATGEPKAKKPRYTDNKEPSP) are disordered. Residues 211 to 227 (GEPKAKKPRYTDNKEPS) show a composition bias toward basic and acidic residues.

This sequence belongs to the eukaryotic RPC3/POLR3C RNA polymerase subunit family. In terms of assembly, component of the RNA polymerase III complex consisting of 17 subunits: a ten-subunit horseshoe-shaped catalytic core composed of POLR3A/RPC1, POLR3B/RPC2, POLR1C/RPAC1, POLR1D/RPAC2, POLR3K/RPC10, POLR2E/RPABC1, POLR2F/RPABC2, POLR2H/RPABC3, POLR2K/RPABC4 and POLR2L/RPABC5; a mobile stalk composed of two subunits POLR3H/RPC8 and CRCP/RPC9, protruding from the core and functioning primarily in transcription initiation; and additional subunits homologous to general transcription factors of the RNA polymerase II machinery, POLR3C/RPC3-POLR3F/RPC6-POLR3G/RPC7 heterotrimer required for transcription initiation and POLR3D/RPC4-POLR3E/RPC5 heterodimer involved in both transcription initiation and termination. Directly interacts with POLR3G/RPC7 and POLR3GL. Directly interacts with POLR3F/RPC6. Interacts with GTF3C4. As part of the RNA polymerase III complex, interacts with PKP2.

The protein resides in the nucleus. Its function is as follows. DNA-dependent RNA polymerase catalyzes the transcription of DNA into RNA using the four ribonucleoside triphosphates as substrates. Specific peripheric component of RNA polymerase III (Pol III) which synthesizes small non-coding RNAs including 5S rRNA, snRNAs, tRNAs and miRNAs from at least 500 distinct genomic loci. Part of POLR3C/RPC3-POLR3F/RPC6-POLR3G/RPC7 heterotrimer, coordinates the dynamics of Pol III stalk and clamp modules during the transition from apo to elongation state. Pol III plays a key role in sensing and limiting infection by intracellular bacteria and DNA viruses. Acts as a nuclear and cytosolic DNA sensor involved in innate immune response. Can sense non-self dsDNA that serves as template for transcription into dsRNA. The non-self RNA polymerase III transcripts, such as Epstein-Barr virus-encoded RNAs (EBERs) induce type I interferon and NF-kappa-B through the RIG-I pathway. Preferentially binds single-stranded DNA (ssDNA) in a sequence-independent manner. The chain is DNA-directed RNA polymerase III subunit RPC3 from Mus musculus (Mouse).